The chain runs to 103 residues: Small ribosomal subunit protein uS10 (103 aa).

It belongs to the universal ribosomal protein uS10 family. Part of the 30S ribosomal subunit.

Involved in the binding of tRNA to the ribosomes. The protein is Small ribosomal subunit protein uS10 of Picrophilus torridus (strain ATCC 700027 / DSM 9790 / JCM 10055 / NBRC 100828 / KAW 2/3).